The chain runs to 166 residues: Succinate dehydrogenase assembly factor 2, mitochondrial (166 aa).

A mitochondrion-targeting transit peptide spans 1-29 (MAVVAVFPALARMLAVSRRRLVSPSLSMT).

This sequence belongs to the SDHAF2 family. As to quaternary structure, interacts with SDHA within the SDH catalytic dimer.

Its subcellular location is the mitochondrion matrix. Plays an essential role in the assembly of succinate dehydrogenase (SDH), an enzyme complex (also referred to as respiratory complex II) that is a component of both the tricarboxylic acid (TCA) cycle and the mitochondrial electron transport chain, and which couples the oxidation of succinate to fumarate with the reduction of ubiquinone (coenzyme Q) to ubiquinol. Required for flavinylation (covalent attachment of FAD) of the flavoprotein subunit SDHA of the SDH catalytic dimer. The polypeptide is Succinate dehydrogenase assembly factor 2, mitochondrial (Bos taurus (Bovine)).